An 88-amino-acid polypeptide reads, in one-letter code: Apolipoprotein C-I (88 aa).

Positions 1-26 (MRLLISLPVLIVVLAMALEGPAPAQA) are cleaved as a signal peptide.

It belongs to the apolipoprotein C1 family.

It is found in the secreted. In terms of biological role, inhibitor of lipoprotein binding to the low density lipoprotein (LDL) receptor, LDL receptor-related protein, and very low density lipoprotein (VLDL) receptor. Associates with high density lipoproteins (HDL) and the triacylglycerol-rich lipoproteins in the plasma and makes up about 10% of the protein of the VLDL and 2% of that of HDL. Appears to interfere directly with fatty acid uptake and is also the major plasma inhibitor of cholesteryl ester transfer protein (CETP). Modulates the interaction of APOE with beta-migrating VLDL and inhibits binding of beta-VLDL to the LDL receptor-related protein. Binds free fatty acids and reduces their intracellular esterification. The protein is Apolipoprotein C-I (APOC1) of Mesocricetus auratus (Golden hamster).